Reading from the N-terminus, the 222-residue chain is Uclacyanin-3 (222 aa).

The signal sequence occupies residues 1–21; the sequence is MGSTVAAALLLFLAAVPAVFA. The 99-residue stretch at 22 to 120 folds into the Phytocyanin domain; sequence ATFKVGDISG…GMKLAVPVLA (99 aa). The Cu cation site is built by His61, Cys102, His107, and Met112. Cys74 and Cys108 are oxidised to a cystine. A disordered region spans residues 121–198; sequence AAPSPSTPSS…APLPPSLSPN (78 aa). 2 stretches are compositionally biased toward pro residues: residues 125–172 and 185–195; these read PSTP…PSAS and TPPPAPLPPSL. Asn198 carries the GPI-anchor amidated asparagine lipid modification. Positions 199–222 are cleaved as a propeptide — removed in mature form; it reads AASKGVMSYGIIGVTMILMYAVMT.

The protein resides in the cell membrane. Functionally, probably acts as an electron carrier involved in oxygen activation and/or lignin formation. The polypeptide is Uclacyanin-3 (UCC3) (Arabidopsis thaliana (Mouse-ear cress)).